Here is a 156-residue protein sequence, read N- to C-terminus: D-aminoacyl-tRNA deacylase (156 aa).

The Gly-cisPro motif, important for rejection of L-amino acids signature appears at 142–143; sequence GP.

This sequence belongs to the DTD family. As to quaternary structure, homodimer.

The protein resides in the cytoplasm. It catalyses the reaction glycyl-tRNA(Ala) + H2O = tRNA(Ala) + glycine + H(+). It carries out the reaction a D-aminoacyl-tRNA + H2O = a tRNA + a D-alpha-amino acid + H(+). An aminoacyl-tRNA editing enzyme that deacylates mischarged D-aminoacyl-tRNAs. Also deacylates mischarged glycyl-tRNA(Ala), protecting cells against glycine mischarging by AlaRS. Acts via tRNA-based rather than protein-based catalysis; rejects L-amino acids rather than detecting D-amino acids in the active site. By recycling D-aminoacyl-tRNA to D-amino acids and free tRNA molecules, this enzyme counteracts the toxicity associated with the formation of D-aminoacyl-tRNA entities in vivo and helps enforce protein L-homochirality. The protein is D-aminoacyl-tRNA deacylase of Cupriavidus metallidurans (strain ATCC 43123 / DSM 2839 / NBRC 102507 / CH34) (Ralstonia metallidurans).